A 132-amino-acid polypeptide reads, in one-letter code: Interleukin-13 (132 aa).

A signal peptide spans 1 to 18 (MALLLTMVIALTCLGGFA). N-linked (GlcNAc...) asparagine glycans are attached at residues asparagine 38, asparagine 49, asparagine 57, and asparagine 72. 2 disulfide bridges follow: cysteine 48-cysteine 76 and cysteine 64-cysteine 90.

This sequence belongs to the IL-4/IL-13 family. In terms of assembly, interacts with IL13RA2.

It is found in the secreted. In terms of biological role, cytokine that plays important roles in allergic inflammation and immune response to parasite infection. Synergizes with IL2 in regulating interferon-gamma synthesis. Stimulates B-cell proliferation, and activation of eosinophils, basophils, and mast cells. Plays an important role in controlling IL33 activity by modulating the production of transmembrane and soluble forms of interleukin-1 receptor-like 1/IL1RL1. Displays the capacity to antagonize Th1-driven proinflammatory immune response and downregulates synthesis of many proinflammatory cytokines including IL1, IL6, IL10, IL12 and TNF-alpha through a mechanism that partially involves suppression of NF-kappa-B. Also functions on nonhematopoietic cells, including endothelial cells where it induces vascular cell adhesion protein 1/VCAM1, which is important in the recruitment of eosinophils. Exerts its biological effects through its receptors which comprises the IL4R chain and the IL13RA1 chain, to activate JAK1 and TYK2, leading to the activation of STAT6. Aside from IL13RA1, another receptor IL13RA2 acts as a high affinity decoy for IL13 and mediates internalization and depletion of extracellular IL13. This Macaca thibetana (Pere David's macaque) protein is Interleukin-13 (IL13).